A 252-amino-acid polypeptide reads, in one-letter code: 14-3-3 protein 10 (252 aa).

It belongs to the 14-3-3 family. In terms of assembly, homodimer.

This is 14-3-3 protein 10 (TFT10) from Solanum lycopersicum (Tomato).